Here is a 303-residue protein sequence, read N- to C-terminus: 5'-3' exonuclease (303 aa).

One can recognise a 5'-3' exonuclease domain in the interval 179-262; that stretch reads ISPAQWVDVK…LATITTEIEA (84 aa).

Functionally, 5'-3' exonuclease acting preferentially on double-stranded DNA. The sequence is that of 5'-3' exonuclease from Halalkalibacterium halodurans (strain ATCC BAA-125 / DSM 18197 / FERM 7344 / JCM 9153 / C-125) (Bacillus halodurans).